A 291-amino-acid polypeptide reads, in one-letter code: GTP-binding protein RHO4 (291 aa).

The span at 14-31 (GNESNIVSQGSPSSSNLP) shows a compositional bias: polar residues. The tract at residues 14–45 (GNESNIVSQGSPSSSNLPESPGTLDEKNLPRL) is disordered. GTP is bound at residue 79 to 86 (GDGAVGKT). The short motif at 101–109 (YIPTIFENY) is the Effector region element. GTP contacts are provided by residues 127–131 (DTAGQ) and 185–188 (LKSD). Residues 250 to 273 (THTIKNPFKRNTTRSDIDSSTGDT) are disordered. Phosphoserine is present on residues Ser264, Ser268, and Ser276. Cys288 bears the Cysteine methyl ester mark. Cys288 is lipidated: S-farnesyl cysteine. A propeptide spans 289-291 (IIM) (removed in mature form).

This sequence belongs to the small GTPase superfamily. Rho family. Interacts with BEM4.

The protein resides in the cell membrane. The catalysed reaction is GTP + H2O = GDP + phosphate + H(+). Its function is as follows. Plays an important role in cell growth. Required to keep the uninucleated state. May be involved in the organization of the cytoskeleton which affects microtubule functions. Most likely RHO3 and RHO4 of S.cerevisiae regulate partially overlapping but different pathways. This Saccharomyces cerevisiae (strain ATCC 204508 / S288c) (Baker's yeast) protein is GTP-binding protein RHO4 (RHO4).